Reading from the N-terminus, the 509-residue chain is Protein WHAT'S THIS FACTOR 1 homolog, chloroplastic (509 aa).

The N-terminal 56 residues, 1–56 (MDAKLLLLPFPSPPATLHHHPPPPKSLFLGASLPLLHPPPPLRLLRPGAPRRLAVV), are a transit peptide targeting the chloroplast. The 329-residue stretch at 65–393 (KEIPFDNVIQ…LKEKMRALVA (329 aa)) folds into the PORR domain. 2 disordered regions span residues 402-431 (VPATSEEADRTNGAAQMLSEGSDVEDDEDE) and 444-509 (SGGK…RERW). Acidic residues predominate over residues 461 to 474 (ENDDSPPDFEDDDG).

Its subcellular location is the plastid. The protein localises to the chloroplast. Its function is as follows. RNA-binding protein involved in group II intron splicing. Binds specific group II introns and promotes their splicing. Functions in the context of a heterodimer with the ribonuclease III domain-containing protein RNC1. In Oryza sativa subsp. japonica (Rice), this protein is Protein WHAT'S THIS FACTOR 1 homolog, chloroplastic.